Here is an 87-residue protein sequence, read N- to C-terminus: Probable Fe(2+)-trafficking protein (87 aa).

The protein belongs to the Fe(2+)-trafficking protein family.

Could be a mediator in iron transactions between iron acquisition and iron-requiring processes, such as synthesis and/or repair of Fe-S clusters in biosynthetic enzymes. This Francisella tularensis subsp. holarctica (strain FTNF002-00 / FTA) protein is Probable Fe(2+)-trafficking protein.